The primary structure comprises 413 residues: DnaJ protein homolog (413 aa).

Positions 10–75 (NTKYYEILGV…REIYDQYGED (66 aa)) constitute a J domain. The CR-type zinc finger occupies 133–217 (GTSKKLSLSR…CKGEKVVQEK (85 aa)). 4 CXXCXGXG motif repeats span residues 146-153 (CSKCKGKG), 162-169 (CPGCQGSG), 189-196 (CNECKGTG), and 205-212 (CSQCKGEK). Residues 387–413 (RRKQAQEAYDEDEDMHGGAQRVQCAQQ) are disordered. Cys-410 carries the cysteine methyl ester modification. Residue Cys-410 is the site of S-farnesyl cysteine attachment. A propeptide spans 411–413 (AQQ) (removed in mature form).

Expressed in seedlings in all tissues, but exceedingly high levels in hypocotyledons and roots.

It localises to the cell membrane. In terms of biological role, plays a continuous role in plant development probably in the structural organization of compartments. This Cucumis sativus (Cucumber) protein is DnaJ protein homolog (DNAJ1).